Reading from the N-terminus, the 200-residue chain is MPINLYSKAVFLKSAARVNQLPEDSGYEVAFAGRSNAGKSSALNCLTNNKNLARTSKTPGRTQLINLFSLDEQRRLVDLPGYGYAKVAMEVKLEWQKNLAHYLEARQCLRGLILLMDVRHPLKDLDQILVNWALHRELPVHILLTKADKLSRSEVKNAVLKVRQYYELAEHLVSVQAFSSVKKDGVEELISLLDRWYEWN.

Residues 25-199 (SGYEVAFAGR…ISLLDRWYEW (175 aa)) form the EngB-type G domain. Residues 33-40 (GRSNAGKS), 60-64 (GRTQL), 78-81 (DLPG), 145-148 (TKAD), and 178-180 (FSS) contribute to the GTP site. Mg(2+) contacts are provided by Ser-40 and Thr-62.

The protein belongs to the TRAFAC class TrmE-Era-EngA-EngB-Septin-like GTPase superfamily. EngB GTPase family. Requires Mg(2+) as cofactor.

Necessary for normal cell division and for the maintenance of normal septation. This chain is Probable GTP-binding protein EngB, found in Legionella pneumophila (strain Corby).